We begin with the raw amino-acid sequence, 156 residues long: Transcriptional repressor NrdR (156 aa).

Residues 3-34 (CPFCGNIDTQVKDSRPAEDHVSIRRRRFCPAC) fold into a zinc finger. Residues 49–139 (LVVIKTSGKR…VYKNFQAADD (91 aa)) form the ATP-cone domain.

The protein belongs to the NrdR family. Zn(2+) is required as a cofactor.

In terms of biological role, negatively regulates transcription of bacterial ribonucleotide reductase nrd genes and operons by binding to NrdR-boxes. The sequence is that of Transcriptional repressor NrdR from Ruegeria pomeroyi (strain ATCC 700808 / DSM 15171 / DSS-3) (Silicibacter pomeroyi).